Reading from the N-terminus, the 89-residue chain is Mu-like prophage FluMu DNA-binding protein Ner (89 aa).

Residues 57–76 constitute a DNA-binding region (H-T-H motif); it reads ERLVANAIGVPPEVIWAGRF.

The protein belongs to the ner transcriptional regulatory family.

Its function is as follows. Negative regulator of transcription starting from the Pe and Pc promoters of Mu. Also negatively regulates its own gene transcription. The chain is Mu-like prophage FluMu DNA-binding protein Ner (nlp) from Haemophilus influenzae (strain ATCC 51907 / DSM 11121 / KW20 / Rd).